The following is a 28-amino-acid chain: Potassium channel toxin alpha-KTx 9.3 (28 aa).

3 disulfides stabilise this stretch: C3–C19, C6–C24, and C10–C26.

It belongs to the short scorpion toxin superfamily. Potassium channel inhibitor family. Alpha-KTx 09 subfamily. As to expression, expressed by the venom gland.

It localises to the secreted. Its function is as follows. Inhibits voltage-gated potassium channels. The protein is Potassium channel toxin alpha-KTx 9.3 of Aegaeobuthus nigrocinctus (Scorpion).